The chain runs to 1169 residues: Translation initiation factor IF-2 (1169 aa).

Disordered stretches follow at residues 69-108 (IKAK…PLLI) and 139-568 (ALSK…LRAA). Basic and acidic residues-rich tracts occupy residues 71-83 (AKNE…DNKN) and 92-102 (HPEKLSKEGLN). Polar residues predominate over residues 139–156 (ALSKNQNKTNTSVITTPN). Over residues 157 to 171 (LKDKKNPSALQDKKP) the composition is skewed to basic and acidic residues. Residues 196–214 (NLANSNRNINANKINNSVN) show a composition bias toward low complexity. Positions 231-248 (ADNNNFPKKNLNSPNVKS) are enriched in polar residues. Positions 265–281 (NTNRPNSNSRQPSSNTQ) are enriched in low complexity. Polar residues-rich tracts occupy residues 282–294 (ISAN…NRQG), 412–432 (MQLQ…NVNK), and 439–455 (NQKT…SPSP). The span at 472–486 (GRTDWDDSAKLEALR) shows a compositional bias: basic and acidic residues. Basic residues predominate over residues 544–560 (KQFKKKKKETTRQRQKR). Positions 661 to 838 (KRPPVITVMG…EVEDLQANPE (178 aa)) constitute a tr-type G domain. The G1 stretch occupies residues 670 to 677 (GHVDHGKT). 670–677 (GHVDHGKT) contacts GTP. The tract at residues 695 to 699 (GITQH) is G2. The G3 stretch occupies residues 720–723 (DTPG). GTP contacts are provided by residues 720–724 (DTPGH) and 774–777 (NKID). The tract at residues 774–777 (NKID) is G4. Residues 810–812 (SAI) are G5.

The protein belongs to the TRAFAC class translation factor GTPase superfamily. Classic translation factor GTPase family. IF-2 subfamily.

Its subcellular location is the cytoplasm. Its function is as follows. One of the essential components for the initiation of protein synthesis. Protects formylmethionyl-tRNA from spontaneous hydrolysis and promotes its binding to the 30S ribosomal subunits. Also involved in the hydrolysis of GTP during the formation of the 70S ribosomal complex. The polypeptide is Translation initiation factor IF-2 (Prochlorococcus marinus subsp. pastoris (strain CCMP1986 / NIES-2087 / MED4)).